Reading from the N-terminus, the 515-residue chain is Bifunctional purine biosynthesis protein PurH (515 aa).

The 145-residue stretch at 1-145 folds into the MGS-like domain; that stretch reads MTKRVLISVS…KNHASVTVVV (145 aa).

This sequence belongs to the PurH family.

The catalysed reaction is (6R)-10-formyltetrahydrofolate + 5-amino-1-(5-phospho-beta-D-ribosyl)imidazole-4-carboxamide = 5-formamido-1-(5-phospho-D-ribosyl)imidazole-4-carboxamide + (6S)-5,6,7,8-tetrahydrofolate. It catalyses the reaction IMP + H2O = 5-formamido-1-(5-phospho-D-ribosyl)imidazole-4-carboxamide. It functions in the pathway purine metabolism; IMP biosynthesis via de novo pathway; 5-formamido-1-(5-phospho-D-ribosyl)imidazole-4-carboxamide from 5-amino-1-(5-phospho-D-ribosyl)imidazole-4-carboxamide (10-formyl THF route): step 1/1. Its pathway is purine metabolism; IMP biosynthesis via de novo pathway; IMP from 5-formamido-1-(5-phospho-D-ribosyl)imidazole-4-carboxamide: step 1/1. This chain is Bifunctional purine biosynthesis protein PurH, found in Streptococcus pneumoniae (strain Taiwan19F-14).